Here is a 697-residue protein sequence, read N- to C-terminus: Elongation factor G (697 aa).

Residues 8–283 (ERCRNIGIMA…AVVDYLPSPL (276 aa)) form the tr-type G domain. GTP is bound by residues 17–24 (AHIDAGKT), 81–85 (DTPGH), and 135–138 (NKID).

The protein belongs to the TRAFAC class translation factor GTPase superfamily. Classic translation factor GTPase family. EF-G/EF-2 subfamily.

The protein resides in the cytoplasm. Catalyzes the GTP-dependent ribosomal translocation step during translation elongation. During this step, the ribosome changes from the pre-translocational (PRE) to the post-translocational (POST) state as the newly formed A-site-bound peptidyl-tRNA and P-site-bound deacylated tRNA move to the P and E sites, respectively. Catalyzes the coordinated movement of the two tRNA molecules, the mRNA and conformational changes in the ribosome. This chain is Elongation factor G, found in Koribacter versatilis (strain Ellin345).